Consider the following 256-residue polypeptide: 5-keto-4-deoxy-D-glucarate aldolase (256 aa).

His50 serves as the catalytic Proton acceptor. Gln151 serves as a coordination point for substrate. Residue Glu153 participates in Mg(2+) binding. Residues Ser178 and Asp179 each coordinate substrate. Asp179 is a Mg(2+) binding site.

This sequence belongs to the HpcH/HpaI aldolase family. KDGluc aldolase subfamily. Homohexamer; trimer of dimers. It depends on Mg(2+) as a cofactor.

The enzyme catalyses 5-dehydro-4-deoxy-D-glucarate = 2-hydroxy-3-oxopropanoate + pyruvate. The catalysed reaction is 2-dehydro-3-deoxy-D-glucarate = 2-hydroxy-3-oxopropanoate + pyruvate. The protein operates within carbohydrate acid metabolism; galactarate degradation; D-glycerate from galactarate: step 2/3. Catalyzes the reversible retro-aldol cleavage of both 5-keto-4-deoxy-D-glucarate and 2-keto-3-deoxy-D-glucarate to pyruvate and tartronic semialdehyde. In Salmonella paratyphi C (strain RKS4594), this protein is 5-keto-4-deoxy-D-glucarate aldolase.